A 301-amino-acid polypeptide reads, in one-letter code: Glutamyl-Q tRNA(Asp) synthetase (301 aa).

Residues 9-13 and E45 contribute to the L-glutamate site; that span reads RFAPS. A 'HIGH' region motif is present at residues 12–22; the sequence is PSPTGPLHLGS. The Zn(2+) site is built by C101, C103, Y121, and C125. L-glutamate-binding residues include Y179 and R197. The 'KMSKS' region motif lies at 235 to 239; sequence KLSKQ. K238 lines the ATP pocket.

It belongs to the class-I aminoacyl-tRNA synthetase family. GluQ subfamily. It depends on Zn(2+) as a cofactor.

Its function is as follows. Catalyzes the tRNA-independent activation of glutamate in presence of ATP and the subsequent transfer of glutamate onto a tRNA(Asp). Glutamate is transferred on the 2-amino-5-(4,5-dihydroxy-2-cyclopenten-1-yl) moiety of the queuosine in the wobble position of the QUC anticodon. The polypeptide is Glutamyl-Q tRNA(Asp) synthetase (Thiobacillus denitrificans (strain ATCC 25259 / T1)).